The following is a 245-amino-acid chain: Phosphoribosylaminoimidazole-succinocarboxamide synthase (245 aa).

Belongs to the SAICAR synthetase family.

The catalysed reaction is 5-amino-1-(5-phospho-D-ribosyl)imidazole-4-carboxylate + L-aspartate + ATP = (2S)-2-[5-amino-1-(5-phospho-beta-D-ribosyl)imidazole-4-carboxamido]succinate + ADP + phosphate + 2 H(+). Its pathway is purine metabolism; IMP biosynthesis via de novo pathway; 5-amino-1-(5-phospho-D-ribosyl)imidazole-4-carboxamide from 5-amino-1-(5-phospho-D-ribosyl)imidazole-4-carboxylate: step 1/2. The protein is Phosphoribosylaminoimidazole-succinocarboxamide synthase of Acaryochloris marina (strain MBIC 11017).